Reading from the N-terminus, the 499-residue chain is Aspartyl/glutamyl-tRNA(Asn/Gln) amidotransferase subunit B (499 aa).

This sequence belongs to the GatB/GatE family. GatB subfamily. Heterotrimer of A, B and C subunits.

The catalysed reaction is L-glutamyl-tRNA(Gln) + L-glutamine + ATP + H2O = L-glutaminyl-tRNA(Gln) + L-glutamate + ADP + phosphate + H(+). It catalyses the reaction L-aspartyl-tRNA(Asn) + L-glutamine + ATP + H2O = L-asparaginyl-tRNA(Asn) + L-glutamate + ADP + phosphate + 2 H(+). In terms of biological role, allows the formation of correctly charged Asn-tRNA(Asn) or Gln-tRNA(Gln) through the transamidation of misacylated Asp-tRNA(Asn) or Glu-tRNA(Gln) in organisms which lack either or both of asparaginyl-tRNA or glutaminyl-tRNA synthetases. The reaction takes place in the presence of glutamine and ATP through an activated phospho-Asp-tRNA(Asn) or phospho-Glu-tRNA(Gln). The sequence is that of Aspartyl/glutamyl-tRNA(Asn/Gln) amidotransferase subunit B from Mesorhizobium japonicum (strain LMG 29417 / CECT 9101 / MAFF 303099) (Mesorhizobium loti (strain MAFF 303099)).